A 247-amino-acid chain; its full sequence is Inhibitory synaptic factor 1 (247 aa).

The stretch at 30–65 (RAVIGQLEGILRDLKEVAKELKEVVEQIDRLTSDFE) forms a coiled coil. Disordered stretches follow at residues 69–90 (DTDD…GGPL), 112–166 (ASTP…RDRV), and 180–217 (DDSE…GVRK). Residues 76–85 (GTVSSTSSSE) are compositionally biased toward polar residues.

It belongs to the INSYN1 family.

The protein resides in the postsynaptic density. In terms of biological role, may be a component of the protein machinery at the inhibitory synapses, probably acting as a scaffold. This chain is Inhibitory synaptic factor 1, found in Xenopus laevis (African clawed frog).